The primary structure comprises 221 residues: Deoxyribose-phosphate aldolase 1 (221 aa).

The active-site Proton donor/acceptor is Asp-89. The active-site Schiff-base intermediate with acetaldehyde is the Lys-152. The active-site Proton donor/acceptor is the Lys-181.

This sequence belongs to the DeoC/FbaB aldolase family. DeoC type 1 subfamily.

It localises to the cytoplasm. The catalysed reaction is 2-deoxy-D-ribose 5-phosphate = D-glyceraldehyde 3-phosphate + acetaldehyde. Its pathway is carbohydrate degradation; 2-deoxy-D-ribose 1-phosphate degradation; D-glyceraldehyde 3-phosphate and acetaldehyde from 2-deoxy-alpha-D-ribose 1-phosphate: step 2/2. In terms of biological role, catalyzes a reversible aldol reaction between acetaldehyde and D-glyceraldehyde 3-phosphate to generate 2-deoxy-D-ribose 5-phosphate. This is Deoxyribose-phosphate aldolase 1 from Oceanobacillus iheyensis (strain DSM 14371 / CIP 107618 / JCM 11309 / KCTC 3954 / HTE831).